The chain runs to 246 residues: Probable transcriptional regulatory protein ACP_0521 (246 aa).

It belongs to the TACO1 family.

The protein localises to the cytoplasm. The chain is Probable transcriptional regulatory protein ACP_0521 from Acidobacterium capsulatum (strain ATCC 51196 / DSM 11244 / BCRC 80197 / JCM 7670 / NBRC 15755 / NCIMB 13165 / 161).